Consider the following 322-residue polypeptide: tRNA U34 carboxymethyltransferase (322 aa).

Residues Lys90, Trp104, Lys109, Gly129, Asp151–Thr153, Met179–Glu180, Met195, Tyr199, and Arg314 contribute to the carboxy-S-adenosyl-L-methionine site.

The protein belongs to the class I-like SAM-binding methyltransferase superfamily. CmoB family. As to quaternary structure, homotetramer.

The catalysed reaction is carboxy-S-adenosyl-L-methionine + 5-hydroxyuridine(34) in tRNA = 5-carboxymethoxyuridine(34) in tRNA + S-adenosyl-L-homocysteine + H(+). Functionally, catalyzes carboxymethyl transfer from carboxy-S-adenosyl-L-methionine (Cx-SAM) to 5-hydroxyuridine (ho5U) to form 5-carboxymethoxyuridine (cmo5U) at position 34 in tRNAs. This chain is tRNA U34 carboxymethyltransferase, found in Alcanivorax borkumensis (strain ATCC 700651 / DSM 11573 / NCIMB 13689 / SK2).